We begin with the raw amino-acid sequence, 287 residues long: F420-non-reducing hydrogenase vhu subunit G (287 aa).

The protein belongs to the [NiFe]/[NiFeSe] hydrogenase small subunit family. In terms of assembly, the F420-non-reducing hydrogenase vhu is composed of four subunits; VhuA, VhuD, VhuG and VhuU.

The protein is F420-non-reducing hydrogenase vhu subunit G (vhuG) of Methanococcus voltae.